The following is a 260-amino-acid chain: Ribosomal RNA small subunit methyltransferase J (260 aa).

Residues 125–126 (ER) and D179 each bind S-adenosyl-L-methionine.

The protein belongs to the methyltransferase superfamily. RsmJ family.

It localises to the cytoplasm. The enzyme catalyses guanosine(1516) in 16S rRNA + S-adenosyl-L-methionine = N(2)-methylguanosine(1516) in 16S rRNA + S-adenosyl-L-homocysteine + H(+). Functionally, specifically methylates the guanosine in position 1516 of 16S rRNA. This is Ribosomal RNA small subunit methyltransferase J from Pseudomonas fluorescens (strain ATCC BAA-477 / NRRL B-23932 / Pf-5).